We begin with the raw amino-acid sequence, 201 residues long: Inosine triphosphate pyrophosphatase (201 aa).

16–21 (TGNAKK) provides a ligand contact to ITP. E44 is a binding site for Mg(2+). ITP is bound by residues K56, 72–73 (DT), K89, 148–151 (FGWD), K171, and 176–177 (HR).

It belongs to the HAM1 NTPase family. Homodimer. Mg(2+) is required as a cofactor. Mn(2+) serves as cofactor.

It is found in the cytoplasm. It carries out the reaction ITP + H2O = IMP + diphosphate + H(+). It catalyses the reaction dITP + H2O = dIMP + diphosphate + H(+). The enzyme catalyses XTP + H2O = XMP + diphosphate + H(+). Functionally, pyrophosphatase that hydrolyzes non-canonical purine nucleotides such as inosine triphosphate (ITP), deoxyinosine triphosphate (dITP) or xanthosine 5'-triphosphate (XTP) to their respective monophosphate derivatives. The enzyme does not distinguish between the deoxy- and ribose forms. Probably excludes non-canonical purines from RNA and DNA precursor pools, thus preventing their incorporation into RNA and DNA and avoiding chromosomal lesions. The protein is Inosine triphosphate pyrophosphatase of Sorghum bicolor (Sorghum).